Here is a 433-residue protein sequence, read N- to C-terminus: Sensor protein RstB (433 aa).

At 1 to 3 (MKK) the chain is on the cytoplasmic side. The chain crosses the membrane as a helical span at residues 4 to 24 (LFIQFYLLLFVCFLVMSLLVG). The Periplasmic portion of the chain corresponds to 25–135 (LVYKFTAERA…PYLYYLHQMR (111 aa)). A helical transmembrane segment spans residues 136–156 (LLDIALIAFIAISLAFPVFIW). The Cytoplasmic portion of the chain corresponds to 157–433 (MRPHWQDMLK…WHNIPQFTSA (277 aa)). Positions 158–210 (RPHWQDMLKLEAAAQRFGDGHLNERIHFDEGSSFERLGVAFNQMADNINALIA) constitute an HAMP domain. One can recognise a Histidine kinase domain in the interval 218–425 (GIAHELRTPL…RFSFSWPLWH (208 aa)). His-276 carries the post-translational modification Phosphohistidine; by autocatalysis.

Autophosphorylated.

It is found in the cell inner membrane. It catalyses the reaction ATP + protein L-histidine = ADP + protein N-phospho-L-histidine.. Functionally, member of the two-component regulatory system RstB/RstA. RstB functions as a membrane-associated protein kinase that phosphorylates RstA. The polypeptide is Sensor protein RstB (rstB) (Escherichia coli (strain K12)).